Here is a 179-residue protein sequence, read N- to C-terminus: MNIIQQLEAEQAAKIEAKRTLPEFSPGDTVRVNVKVTEGTRTRVQAYEGVCIARSGGGLQENFTVRKISYGEGVERVFPIYSPMIESVDVVRRGKVRRAKLYYLRDRRGKSARIVEDTGVRARKLNDAERAAIAEEKARIEAEKVAAAQALAAEKAAADAAEAKAAAEAAAAAAEPAAE.

This sequence belongs to the bacterial ribosomal protein bL19 family.

In terms of biological role, this protein is located at the 30S-50S ribosomal subunit interface and may play a role in the structure and function of the aminoacyl-tRNA binding site. The protein is Large ribosomal subunit protein bL19 of Rhizobium johnstonii (strain DSM 114642 / LMG 32736 / 3841) (Rhizobium leguminosarum bv. viciae).